The chain runs to 533 residues: CTP synthase (533 aa).

Residues 1-270 (MVHLAKYIVV…GDYIVRRIEL (270 aa)) form an amidoligase domain region. Position 16 (serine 16) interacts with CTP. Serine 16 is a binding site for UTP. Residue 17–22 (SIGKGI) coordinates ATP. L-glutamine is bound at residue tyrosine 57. ATP is bound at residue aspartate 74. Positions 74 and 144 each coordinate Mg(2+). Residues 151–153 (DIE), 191–196 (KTKPTQ), and lysine 227 each bind CTP. Residues 191–196 (KTKPTQ) and lysine 227 each bind UTP. The Glutamine amidotransferase type-1 domain occupies 303–533 (YVELEDSYIS…FLRAALERSR (231 aa)). Glycine 355 provides a ligand contact to L-glutamine. The active-site Nucleophile; for glutamine hydrolysis is the cysteine 382. L-glutamine contacts are provided by residues 383–386 (LGMQ), glutamate 405, and arginine 462. Residues histidine 507 and glutamate 509 contribute to the active site.

It belongs to the CTP synthase family. In terms of assembly, homotetramer.

It carries out the reaction UTP + L-glutamine + ATP + H2O = CTP + L-glutamate + ADP + phosphate + 2 H(+). The catalysed reaction is L-glutamine + H2O = L-glutamate + NH4(+). The enzyme catalyses UTP + NH4(+) + ATP = CTP + ADP + phosphate + 2 H(+). The protein operates within pyrimidine metabolism; CTP biosynthesis via de novo pathway; CTP from UDP: step 2/2. With respect to regulation, allosterically activated by GTP, when glutamine is the substrate; GTP has no effect on the reaction when ammonia is the substrate. The allosteric effector GTP functions by stabilizing the protein conformation that binds the tetrahedral intermediate(s) formed during glutamine hydrolysis. Inhibited by the product CTP, via allosteric rather than competitive inhibition. Its function is as follows. Catalyzes the ATP-dependent amination of UTP to CTP with either L-glutamine or ammonia as the source of nitrogen. Regulates intracellular CTP levels through interactions with the four ribonucleotide triphosphates. The chain is CTP synthase from Methanothermobacter thermautotrophicus (strain ATCC 29096 / DSM 1053 / JCM 10044 / NBRC 100330 / Delta H) (Methanobacterium thermoautotrophicum).